A 541-amino-acid chain; its full sequence is AT-rich interactive domain-containing protein 3A (541 aa).

The disordered stretch occupies residues 17-172; sequence RLQQELEARQ…KHPNPQAFPT (156 aa). The span at 55 to 73 shows a compositional bias: low complexity; the sequence is LKIQRAQAAALAAMRAAAA. The span at 84 to 102 shows a compositional bias: acidic residues; the sequence is SDEEEEDGESMASDEEDEK. Positions 103-112 are enriched in basic and acidic residues; that stretch reads ERDGESERYP. The span at 115–144 shows a compositional bias: acidic residues; that stretch reads GSEEEDLKGKWDEDDFEDEGEEDDYEDMEE. Residues 212–304 enclose the ARID domain; it reads DPKRKEFLDD…YLYPYECEKR (93 aa). The REKLES domain maps to 407–501; it reads AALEQLREKL…GVLFAQPPTS (95 aa). The interval 408–450 is important for nuclear localization; it reads ALEQLREKLESGEPPEKKMALGTEEQQRLQRAIQHNLLAMTAQ. The homodimerization stretch occupies residues 452–473; the sequence is PMNIRINSQAEGRQDSAVNLTT. The interval 497–504 is important for cytoplasmic localization; that stretch reads QPPTSASG. A disordered region spans residues 499 to 541; that stretch reads PTSASGTSKGSSNRTGSIGGGSSTSQAAPPPAPSAPTSNNPSP.

Homodimer.

Its subcellular location is the nucleus. It is found in the cytoplasm. Its function is as follows. Transcription factor required for smad1 and smad2-mediated responses to TGFbeta during mesoderm induction. This Xenopus tropicalis (Western clawed frog) protein is AT-rich interactive domain-containing protein 3A (arid3a).